The following is a 440-amino-acid chain: Ribosomal protein uS12 methylthiotransferase RimO (440 aa).

Residues 1-117 form the MTTase N-terminal domain; it reads MKIFFISLGC…ITEVIDKVLG (117 aa). The [4Fe-4S] cluster site is built by Cys10, Cys46, Cys80, Cys154, Cys158, and Cys161. One can recognise a Radical SAM core domain in the interval 140 to 370; that stretch reads TTGGYYSFLK…MEIQQGIAFE (231 aa). The TRAM domain maps to 373 to 440; it reads ESMVGRKLKV…KEYDLIGTAE (68 aa).

This sequence belongs to the methylthiotransferase family. RimO subfamily. Requires [4Fe-4S] cluster as cofactor.

It localises to the cytoplasm. It carries out the reaction L-aspartate(89)-[ribosomal protein uS12]-hydrogen + (sulfur carrier)-SH + AH2 + 2 S-adenosyl-L-methionine = 3-methylsulfanyl-L-aspartate(89)-[ribosomal protein uS12]-hydrogen + (sulfur carrier)-H + 5'-deoxyadenosine + L-methionine + A + S-adenosyl-L-homocysteine + 2 H(+). Functionally, catalyzes the methylthiolation of an aspartic acid residue of ribosomal protein uS12. In Lachnoclostridium phytofermentans (strain ATCC 700394 / DSM 18823 / ISDg) (Clostridium phytofermentans), this protein is Ribosomal protein uS12 methylthiotransferase RimO.